Here is a 357-residue protein sequence, read N- to C-terminus: Alanine racemase (357 aa).

Residue Lys35 is the Proton acceptor; specific for D-alanine of the active site. An N6-(pyridoxal phosphate)lysine modification is found at Lys35. Residue Arg131 participates in substrate binding. The active-site Proton acceptor; specific for L-alanine is the Tyr256. Met304 contributes to the substrate binding site.

This sequence belongs to the alanine racemase family. The cofactor is pyridoxal 5'-phosphate.

The enzyme catalyses L-alanine = D-alanine. It functions in the pathway amino-acid biosynthesis; D-alanine biosynthesis; D-alanine from L-alanine: step 1/1. Functionally, catalyzes the interconversion of L-alanine and D-alanine. May also act on other amino acids. The polypeptide is Alanine racemase (alr) (Legionella pneumophila (strain Lens)).